The primary structure comprises 856 residues: Valine--tRNA ligase (856 aa).

Positions 47-57 (PTASGVLHIGH) match the 'HIGH' region motif. Positions 578–582 (KMSKS) match the 'KMSKS' region motif. Lysine 581 contacts ATP.

It belongs to the class-I aminoacyl-tRNA synthetase family. ValS type 2 subfamily. Monomer.

The protein localises to the cytoplasm. It carries out the reaction tRNA(Val) + L-valine + ATP = L-valyl-tRNA(Val) + AMP + diphosphate. In terms of biological role, catalyzes the attachment of valine to tRNA(Val). As ValRS can inadvertently accommodate and process structurally similar amino acids such as threonine, to avoid such errors, it has a 'posttransfer' editing activity that hydrolyzes mischarged Thr-tRNA(Val) in a tRNA-dependent manner. This is Valine--tRNA ligase from Tropheryma whipplei (strain Twist) (Whipple's bacillus).